A 279-amino-acid polypeptide reads, in one-letter code: Ribosomal RNA small subunit methyltransferase A (279 aa).

The S-adenosyl-L-methionine site is built by histidine 10, leucine 12, glycine 37, glutamate 58, aspartate 83, and asparagine 108.

Belongs to the class I-like SAM-binding methyltransferase superfamily. rRNA adenine N(6)-methyltransferase family. RsmA subfamily.

Its subcellular location is the cytoplasm. The catalysed reaction is adenosine(1518)/adenosine(1519) in 16S rRNA + 4 S-adenosyl-L-methionine = N(6)-dimethyladenosine(1518)/N(6)-dimethyladenosine(1519) in 16S rRNA + 4 S-adenosyl-L-homocysteine + 4 H(+). Its function is as follows. Specifically dimethylates two adjacent adenosines (A1518 and A1519) in the loop of a conserved hairpin near the 3'-end of 16S rRNA in the 30S particle. May play a critical role in biogenesis of 30S subunits. The sequence is that of Ribosomal RNA small subunit methyltransferase A from Synechococcus elongatus (strain ATCC 33912 / PCC 7942 / FACHB-805) (Anacystis nidulans R2).